We begin with the raw amino-acid sequence, 309 residues long: Ornithine carbamoyltransferase (309 aa).

Residues 51–54, Gln-78, Arg-102, and 129–132 contribute to the carbamoyl phosphate site; these read STRT and HPCQ. L-ornithine-binding positions include Asn-161, Asp-225, and 229-230; that span reads SM. Carbamoyl phosphate-binding positions include 265–266 and Arg-293; that span reads CL.

It belongs to the aspartate/ornithine carbamoyltransferase superfamily. OTCase family.

It is found in the cytoplasm. It carries out the reaction carbamoyl phosphate + L-ornithine = L-citrulline + phosphate + H(+). The protein operates within amino-acid biosynthesis; L-arginine biosynthesis; L-arginine from L-ornithine and carbamoyl phosphate: step 1/3. Its function is as follows. Reversibly catalyzes the transfer of the carbamoyl group from carbamoyl phosphate (CP) to the N(epsilon) atom of ornithine (ORN) to produce L-citrulline. The sequence is that of Ornithine carbamoyltransferase from Mycolicibacterium paratuberculosis (strain ATCC BAA-968 / K-10) (Mycobacterium paratuberculosis).